A 934-amino-acid polypeptide reads, in one-letter code: MTELKSKGPRAPHVAGGPPSPEVGSPLLCRPAAGPFQGSQTSDTLPEVSAIPISLDGLLFPRLCQGQDPPDKKTQNQQSLSDVEGAYSRAEATRGTGGSSSRPPEKDSGLLDSVLDTLLAPSGPGQSQPSPPACEVTSSWCLFGPELPEDPPAAPATQRVLSPLMSRSGGKTEDSSGTAAAHKVLPRGLSPSRQLLLPTSGSPHWSGAPVKPSPQPTAVEVEEEDGSESEDSAGPLLKGKSRVLGGAAAGGGAAAVPPGAAAGGVGLVPKEDSRFSAPRVALVEQDAPMAPGRSPLATTMMDFIHVPIVPLNHALLAARTRQLLEDESYDGGAGAASAFAPPQSSPSASSTPVAVGDFPDCAYPPDAEPKDNAYPLYGDFQPLALKIKEEEEGAEASARSPGSYLVAGANPAAFPDFPLGPPPQLPPRAPPSRPGEAAVTAAPASASVSSASSPGSTLECILYKAEGALPQQGQFAPPPCKAPGAGGCLLPRDGLPSTSASAAAAAGAAPTLYPALGLNGLPQLGYQAAVLKEGLQQVYPPYLNYLRPDSEASQSPQYSFESLPQKICLICGDEASGCHYGVLTCGSCKVFFKRAMEGQHNYLCAGRNDCIVDKIRRKNCPACRLRKCCQAGMVLGGRKFKKFNKVRVMRALDAVALPQPVGIPNESQVLSQRFTFSPGQDIQLIPPLIKLLMSIEPDVIYAGHDNSKPDTSSSLLTSLNQLGERQLLSVVKWSKSLPGFRNLHIDDQITLIQYSWMSLMVFGLGWRSYKHVSGQMLYFAPDLILNEQRMKESSFYSLCLTMWQIPQEFVKLQVSQEEFLCMKVLLLLNTIPLEGLRSQTQFEEMRSSYIRELIKAIGLRQKGVVSSSQRFYQLTKLLDNLHDLVKQLHLYCLNTFIQSRALSVEFPEMMSEVIAAQLPKILAGMVKPLLFHKK.

The interval 1 to 49 (MTELKSKGPRAPHVAGGPPSPEVGSPLLCRPAAGPFQGSQTSDTLPEVS) is disordered. The interval 1 to 164 (MTELKSKGPR…PATQRVLSPL (164 aa)) is AF3; mediates transcriptional activation. A modulating, Pro-Rich region spans residues 1–567 (MTELKSKGPR…YSFESLPQKI (567 aa)). Serine 20 bears the Phosphoserine mark. An LXXL motif 1 motif is present at residues 55–59 (LDGLL). The interval 61-239 (PRLCQGQDPP…EDSAGPLLKG (179 aa)) is disordered. Serine 81 carries the phosphoserine modification. Residues 115-119 (LDTLL) carry the LXXL motif 2 motif. 2 positions are modified to phosphoserine: serine 130 and serine 162. The segment at 165 to 305 (MSRSGGKTED…LATTMMDFIH (141 aa)) is mediates transcriptional transrepression. The Nuclear localization signal motif lies at 183 to 187 (KVLPR). The residue at position 190 (serine 190) is a Phosphoserine. The segment covering 191–203 (PSRQLLLPTSGSP) has biased composition (polar residues). Phosphoserine is present on serine 213. A compositionally biased stretch (acidic residues) spans 220-231 (EVEEEDGSESED). Serine 294 is subject to Phosphoserine; by MAPK1. Residues 331–375 (GGAGAASAFAPPQSSPSASSTPVAVGDFPDCAYPPDAEPKDNAYP) form a disordered region. Residues 335 to 350 (AASAFAPPQSSPSASS) show a composition bias toward low complexity. Residue serine 345 is modified to Phosphoserine; by MAPK. Lysine 388 is covalently cross-linked (Glycyl lysine isopeptide (Lys-Gly) (interchain with G-Cter in SUMO); alternate). A Glycyl lysine isopeptide (Lys-Gly) (interchain with G-Cter in ubiquitin); alternate cross-link involves residue lysine 388. Serine 400 bears the Phosphoserine; by CDK2 mark. Residues 415–454 (PDFPLGPPPQLPPRAPPSRPGEAAVTAAPASASVSSASSP) form a disordered region. Over residues 418–433 (PLGPPPQLPPRAPPSR) the composition is skewed to pro residues. The span at 434–454 (PGEAAVTAAPASASVSSASSP) shows a compositional bias: low complexity. An AF1; mediates transcriptional activation region spans residues 456 to 547 (STLECILYKA…VYPPYLNYLR (92 aa)). Lysine 532 is covalently cross-linked (Glycyl lysine isopeptide (Lys-Gly) (interchain with G-Cter in SUMO)). NR C4-type zinc fingers lie at residues 568-588 (CLIC…CGSC) and 604-628 (CAGR…LRKC). A DNA-binding region (nuclear receptor) is located at residues 568–640 (CLICGDEASG…AGMVLGGRKF (73 aa)). Position 677 is a phosphoserine (serine 677). The 235-residue stretch at 680–914 (QDIQLIPPLI…EFPEMMSEVI (235 aa)) folds into the NR LBD domain. Residues 688 to 934 (LIKLLMSIEP…MVKPLLFHKK (247 aa)) are AF2; mediates transcriptional activation. Residue arginine 767 participates in progesterone binding.

This sequence belongs to the nuclear hormone receptor family. In terms of assembly, interacts with SMARD1 and UNC45A. Interacts with CUEDC2; the interaction promotes ubiquitination, decreases sumoylation, and represses transcriptional activity. Interacts with PIAS3; the interaction promotes sumoylation of PR in a hormone-dependent manner, inhibits DNA-binding, and alters nuclear export. Interacts with SP1; the interaction requires ligand-induced phosphorylation on Ser-345 by ERK1/2-MAPK. Interacts with PRMT2. Interacts with NCOA2 and NCOA1. Interacts with KLF9. Interacts with GTF2B. Phosphorylated on multiple serine sites. Several of these sites are hormone-dependent. Phosphorylation on Ser-294 is highly hormone-dependent and modulates ubiquitination and sumoylation on Lys-388. Phosphorylation on Ser-345 also requires induction by hormone. Basal phosphorylation on Ser-81, Ser-162, Ser-190 and Ser-400 is increased in response to progesterone and can be phosphorylated in vitro by the CDK2-A1 complex. Increased levels of phosphorylation on Ser-400 also in the presence of EGF, heregulin, IGF, PMA and FBS. Phosphorylation at this site by CDK2 is ligand-independent, and increases nuclear translocation and transcriptional activity. Phosphorylation at Ser-162 and Ser-294, but not at Ser-190, is impaired during the G(2)/M phase of the cell cycle. Phosphorylation on Ser-345 by ERK1/2 MAPK is required for interaction with SP1. Post-translationally, sumoylation is hormone-dependent and represses transcriptional activity. Sumoylation on all three sites is enhanced by PIAS3. Desumoylated by SENP1. Sumoylation on Lys-388, the main site of sumoylation, is repressed by ubiquitination on the same site, and modulated by phosphorylation at Ser-294. In terms of processing, ubiquitination is hormone-dependent and represses sumoylation on the same site. Promoted by MAPK-mediated phosphorylation on Ser-294. Ubiquitinated by UBR5, leading to its degradation: UBR5 specifically recognizes and binds ligand-bound PGR when it is not associated with coactivators (NCOAs). In presence of NCOAs, the UBR5-degron is not accessible, preventing its ubiquitination and degradation. Palmitoylated by ZDHHC7 and ZDHHC21. Palmitoylation is required for plasma membrane targeting and for rapid intracellular signaling via ERK and AKT kinases and cAMP generation.

It is found in the nucleus. The protein localises to the cytoplasm. Its function is as follows. The steroid hormones and their receptors are involved in the regulation of eukaryotic gene expression and affect cellular proliferation and differentiation in target tissues. Transcriptional activator of several progesteron-dependent promoters in a variety of cell types. Involved in activation of SRC-dependent MAPK signaling on hormone stimulation. This is Progesterone receptor (PGR) from Colobus guereza (Mantled guereza).